A 538-amino-acid chain; its full sequence is Solute carrier family 2, facilitated glucose transporter member 9 (538 aa).

Topologically, residues 1-34 (MDSRELALASLMCDTGGPGELSVGHQQRRTKKWS) are cytoplasmic. Serine 3 is modified (phosphoserine). Residues 35-54 (FSLVVAALVGAFGSSFLYGY) form a helical membrane-spanning segment. Residues asparagine 55 and asparagine 71 are each glycosylated (N-linked (GlcNAc...) asparagine). Over 55–88 (NLSVVNAPTPYIKAFYNGTWYRRHGQPIDPDTLT) the chain is Extracellular. The chain crosses the membrane as a helical span at residues 89–109 (LLWSVTVSIFAIGGLVGTLMV). Over 110–120 (KMIGKFLGRKS) the chain is Cytoplasmic. Residues 121–143 (TLLVNNGFAISAALLMACSLRAG) traverse the membrane as a helical segment. Residues 144–148 (TFEML) are Extracellular-facing. The helical transmembrane segment at 149-170 (IVGRFIMGVDGGIALSALPMYL) threads the bilayer. The Cytoplasmic segment spans residues 171–181 (NEISPKEIRGS). The helical transmembrane segment at 182–200 (LGQVTAIFICIGVFSGQLL) threads the bilayer. The Extracellular portion of the chain corresponds to 201-211 (GLPELLGREST). Residues 212–233 (WPYLFGVIIVPALVQLASLPFL) form a helical membrane-spanning segment. Over 234–297 (PESPRYLLFE…LLRAPFVRWQ (64 aa)) the chain is Cytoplasmic. A helical membrane pass occupies residues 298 to 319 (VITVIITMASYQLCGLNAIWFY). Topologically, residues 320–333 (TNSIFGKAGIPQDK) are extracellular. A helical membrane pass occupies residues 334–356 (IPYITLSTGGIETLAAIFSGLVI). The Cytoplasmic portion of the chain corresponds to 357 to 362 (ERLGRR). A helical transmembrane segment spans residues 363–385 (PLLIGGFGLMALFFGTLTATLTL). Topologically, residues 386 to 390 (QDQAP) are extracellular. Residues 391-418 (WVPYLSIVCILAIIASFCSGPGGIPFIL) form a helical membrane-spanning segment. Topologically, residues 419–429 (TGEFFQQSERP) are cytoplasmic. The chain crosses the membrane as a helical span at residues 430 to 453 (AAFMIAGTVNWLSNFAVGLLFPFI). Residues 454 to 458 (QKSLD) are Extracellular-facing. The chain crosses the membrane as a helical span at residues 459 to 480 (SYCFLVFATICIAGATYFYFVL). Over 481-538 (PETKNRTHAEISQAFAKRNKAQPPEVKADSAMTEEKANSQTEPDSSSTLDSYGQNKIV) the chain is Cytoplasmic. Positions 495-538 (FAKRNKAQPPEVKADSAMTEEKANSQTEPDSSSTLDSYGQNKIV) are disordered. The span at 518–538 (NSQTEPDSSSTLDSYGQNKIV) shows a compositional bias: polar residues.

This sequence belongs to the major facilitator superfamily. Sugar transporter (TC 2.A.1.1) family. Post-translationally, N-glycosylated. In terms of tissue distribution, highly expressed in the intestine, with high expression in the jejunum and ileum, the segments of the intestine that perform the majority of urate excretion. Isoform 1: Widely expressed. Isoform 1: In kidney, expressed at low levels in proximal tubules. Isoform 2: Primarily expressed in liver and kidney; with specific expression in distal convoluted and connecting tubules of kidney.

Its subcellular location is the basolateral cell membrane. The protein localises to the apical cell membrane. The enzyme catalyses urate(out) = urate(in). Functionally, high-capacity urate transporter, which may play a role in the urate reabsorption by proximal tubules. May have a residual high-affinity, low-capacity glucose and fructose transporter activity. Transports urate at rates 45- to 60-fold faster than glucose. Does not transport galactose. May mediate small uptake of adenine but not of other nucleobases. In Mus musculus (Mouse), this protein is Solute carrier family 2, facilitated glucose transporter member 9.